The primary structure comprises 81 residues: N.vectensis toxin 4 (81 aa).

Residues 1–20 (MRSSWMFVICFAMLILYTNG) form the signal peptide. Disulfide bonds link C46-C75, C48-C70, and C63-C76.

In terms of tissue distribution, expressed in ectodermal gland cells. In adult female tissues, highly transcribed in mesenteries (gametes-producing tissue) and slightly transcribed in tentacles, pharynx and physa.

Functionally, has toxic effects on zebrafish larvae. It causes contractile paralysis and twitching of the tail within 30 minutes, followed by death within 40 minutes. Does not show any toxicity when injected into arthropods (cherry shrimps or grass shrimps). The protein is N.vectensis toxin 4 of Nematostella vectensis (Starlet sea anemone).